Reading from the N-terminus, the 410-residue chain is Monoglucosyldiacylglycerol epimerase (410 aa).

Residues Met-1–Ala-14 form the signal peptide. The next 2 helical transmembrane spans lie at Ala-71–Phe-91 and Leu-96–Ala-116. Tyr-320 (proton acceptor) is an active-site residue. A helical transmembrane segment spans residues Ile-380–Ser-400.

This sequence belongs to the short-chain dehydrogenases/reductases (SDR) family.

Its subcellular location is the membrane. It catalyses the reaction a 1,2-diacyl-3-O-(beta-D-glucopyranosyl)-sn-glycerol = a 1,2-diacyl-3-O-(beta-D-galactosyl)-sn-glycerol. Functionally, involved in the biosynthesis of galactolipids found in the photosynthetic membranes. Catalyzes the isomerization of monoglucosyldiacylglycerol (GlcDG) to yield monogalactosyldiacylglycerol (MGDG). The polypeptide is Monoglucosyldiacylglycerol epimerase (Synechocystis sp. (strain ATCC 27184 / PCC 6803 / Kazusa)).